Reading from the N-terminus, the 404-residue chain is Glucose-1-phosphate adenylyltransferase (404 aa).

Alpha-D-glucose 1-phosphate-binding positions include Tyr-99, Gly-164, 179-180 (EK), and Ser-197.

The protein belongs to the bacterial/plant glucose-1-phosphate adenylyltransferase family.

It carries out the reaction alpha-D-glucose 1-phosphate + ATP + H(+) = ADP-alpha-D-glucose + diphosphate. It functions in the pathway capsule biogenesis; capsule polysaccharide biosynthesis. Its pathway is glycan biosynthesis; glycogen biosynthesis. Involved in the biosynthesis of ADP-glucose, a building block, required in the biosynthesis of maltose-1-phosphate (M1P) and in the elongation reactions to produce linear alpha-1,4-glucans. Catalyzes the reaction between ATP and alpha-D-glucose 1-phosphate (G1P) to produce pyrophosphate and ADP-Glc. The protein is Glucose-1-phosphate adenylyltransferase of Mycobacterium leprae (strain Br4923).